A 179-amino-acid polypeptide reads, in one-letter code: Large ribosomal subunit protein uL5 (179 aa).

Belongs to the universal ribosomal protein uL5 family. In terms of assembly, part of the 50S ribosomal subunit; part of the 5S rRNA/L5/L18/L25 subcomplex. Contacts the 5S rRNA and the P site tRNA. Forms a bridge to the 30S subunit in the 70S ribosome.

In terms of biological role, this is one of the proteins that bind and probably mediate the attachment of the 5S RNA into the large ribosomal subunit, where it forms part of the central protuberance. In the 70S ribosome it contacts protein S13 of the 30S subunit (bridge B1b), connecting the 2 subunits; this bridge is implicated in subunit movement. Contacts the P site tRNA; the 5S rRNA and some of its associated proteins might help stabilize positioning of ribosome-bound tRNAs. The sequence is that of Large ribosomal subunit protein uL5 from Pseudomonas syringae pv. tomato (strain ATCC BAA-871 / DC3000).